Consider the following 176-residue polypeptide: Small ribosomal subunit protein uS5 (176 aa).

Residues 15 to 78 form the S5 DRBM domain; that stretch reads FEERIVEIRR…SAARRNVFEV (64 aa).

The protein belongs to the universal ribosomal protein uS5 family. In terms of assembly, part of the 30S ribosomal subunit. Contacts proteins S4 and S8.

Its function is as follows. With S4 and S12 plays an important role in translational accuracy. In terms of biological role, located at the back of the 30S subunit body where it stabilizes the conformation of the head with respect to the body. The polypeptide is Small ribosomal subunit protein uS5 (Thermosipho africanus (strain TCF52B)).